We begin with the raw amino-acid sequence, 433 residues long: Homogentisate 1,2-dioxygenase (433 aa).

The active-site Proton acceptor is the His-288. Fe cation is bound by residues His-331 and Glu-337. Tyr-346 and His-367 together coordinate homogentisate. Fe cation is bound at residue His-367.

It belongs to the homogentisate dioxygenase family. As to quaternary structure, hexamer; dimer of trimers. Fe cation is required as a cofactor.

The catalysed reaction is homogentisate + O2 = 4-maleylacetoacetate + H(+). Its pathway is amino-acid degradation; L-phenylalanine degradation; acetoacetate and fumarate from L-phenylalanine: step 4/6. Functionally, involved in the catabolism of homogentisate (2,5-dihydroxyphenylacetate or 2,5-OH-PhAc), a central intermediate in the degradation of phenylalanine and tyrosine. Catalyzes the oxidative ring cleavage of the ar omatic ring of 2,5-dihydroxyphenylacetate to yield maleylacetoacetate. This is Homogentisate 1,2-dioxygenase from Pseudomonas putida (strain ATCC 47054 / DSM 6125 / CFBP 8728 / NCIMB 11950 / KT2440).